Consider the following 188-residue polypeptide: MATYEVLCEVARKLGTDDREVVLFLLNVFIPQPTLAQLIGALRALKEEGRLTFPLLAECLFRAGRRDLLRDLLHLDPRFLERHLAGTMSYFSPYQLTVLHVDGELCARDIRSLIFLSKDTIGSRSTPQTFLHWVYCMENLDLLGPTDVDALMSMLRSLSRVDLQRQVQTLMGLHLSGPSHSQHYRHTP.

DED domains lie at Ala-2 to His-74 and Pro-93 to Thr-169.

Interacts with host RIPK1, TRAF2, MAP3K14, IKBKB, and IKBKG. Interacts with host CADM1; this interaction is essential for chronic NF-kappa-B activation.

Functionally, plays a role in the modulation of host signaling pathways by acting as an activator of both the classic and the alternative NF-kappa-B pathways. Thereby, initiates an important range of cellular processes to promote cell survival, proliferation and protection from apoptosis. The polypeptide is Viral FLICE protein (ORF71) (Human herpesvirus 8 type P (isolate GK18) (HHV-8)).